The chain runs to 353 residues: UPF0283 membrane protein YcjF (353 aa).

Over residues 1 to 19 the composition is skewed to basic and acidic residues; the sequence is MSEPLKPRIDFAEPLKEEP. The interval 1–35 is disordered; sequence MSEPLKPRIDFAEPLKEEPTSAFKAQQTFSEAESR. The next 3 helical transmembrane spans lie at 70 to 90, 100 to 120, and 213 to 233; these read MVMG…VQWT, VALG…GSVV, and ESTL…FIAW.

It belongs to the UPF0283 family.

It localises to the cell inner membrane. In Salmonella dublin (strain CT_02021853), this protein is UPF0283 membrane protein YcjF.